Consider the following 676-residue polypeptide: DNA ligase (676 aa).

Residues 35–39 (DAEYD), 84–85 (SL), and E118 each bind NAD(+). Catalysis depends on K120, which acts as the N6-AMP-lysine intermediate. Positions 141, 176, 284, and 308 each coordinate NAD(+). 4 residues coordinate Zn(2+): C402, C405, C420, and C426. A BRCT domain is found at 595–676 (SYLSLIHGKI…WLQYTQSSEN (82 aa)).

It belongs to the NAD-dependent DNA ligase family. LigA subfamily. Mg(2+) is required as a cofactor. Requires Mn(2+) as cofactor.

It catalyses the reaction NAD(+) + (deoxyribonucleotide)n-3'-hydroxyl + 5'-phospho-(deoxyribonucleotide)m = (deoxyribonucleotide)n+m + AMP + beta-nicotinamide D-nucleotide.. Its function is as follows. DNA ligase that catalyzes the formation of phosphodiester linkages between 5'-phosphoryl and 3'-hydroxyl groups in double-stranded DNA using NAD as a coenzyme and as the energy source for the reaction. It is essential for DNA replication and repair of damaged DNA. The protein is DNA ligase of Ehrlichia chaffeensis (strain ATCC CRL-10679 / Arkansas).